The chain runs to 290 residues: Shikimate dehydrogenase (NADP(+)) (290 aa).

Shikimate contacts are provided by residues 22-24 (SLS) and T68. The active-site Proton acceptor is the K72. Residues N93 and D108 each coordinate shikimate. Residues 133–137 (GSGGS) and I228 contribute to the NADP(+) site. Position 230 (Y230) interacts with shikimate. G251 lines the NADP(+) pocket.

This sequence belongs to the shikimate dehydrogenase family. As to quaternary structure, homodimer.

The catalysed reaction is shikimate + NADP(+) = 3-dehydroshikimate + NADPH + H(+). Its pathway is metabolic intermediate biosynthesis; chorismate biosynthesis; chorismate from D-erythrose 4-phosphate and phosphoenolpyruvate: step 4/7. In terms of biological role, involved in the biosynthesis of the chorismate, which leads to the biosynthesis of aromatic amino acids. Catalyzes the reversible NADPH linked reduction of 3-dehydroshikimate (DHSA) to yield shikimate (SA). The chain is Shikimate dehydrogenase (NADP(+)) from Leptospira borgpetersenii serovar Hardjo-bovis (strain JB197).